A 244-amino-acid polypeptide reads, in one-letter code: Probable transcriptional regulatory protein Xfasm12_1059 (244 aa).

The protein belongs to the TACO1 family.

The protein localises to the cytoplasm. The chain is Probable transcriptional regulatory protein Xfasm12_1059 from Xylella fastidiosa (strain M12).